Reading from the N-terminus, the 400-residue chain is Phosphoglycerate kinase (400 aa).

Residues 24-26 (DFN), Arg39, 62-65 (HFGR), Arg121, and Arg154 contribute to the substrate site. Residues Lys205, Gly296, Glu327, and 356–359 (GGDS) contribute to the ATP site.

Belongs to the phosphoglycerate kinase family. As to quaternary structure, monomer.

The protein localises to the cytoplasm. The catalysed reaction is (2R)-3-phosphoglycerate + ATP = (2R)-3-phospho-glyceroyl phosphate + ADP. Its pathway is carbohydrate degradation; glycolysis; pyruvate from D-glyceraldehyde 3-phosphate: step 2/5. The sequence is that of Phosphoglycerate kinase from Rippkaea orientalis (strain PCC 8801 / RF-1) (Cyanothece sp. (strain PCC 8801)).